Here is a 348-residue protein sequence, read N- to C-terminus: MRKMSEEEFYLFKNISSVGPWDGPQYHIAPVWAFYLQAAFMGTVFLIGFPLNAMVLVATLRYKKLRQPLNYILVNVSFGGFLLCIFSVFPVFVASCNGYFVFGRHVCALEGFLGTVAGLVTGWSLAFLAFERYIVICKPFGNFRFSSKHALTVVLATWTIGIGVSIPPFFGWSRFIPEGLQCSCGPDWYTVGTKYRSESYTWFLFIFCFIVPLSLICFSYTQLLRALKAVAAQQQESATTQKAEREVSRMVVVMVGSFCVCYVPYAAFAMYMVNNRNHGLDLRLVTIPSFFSKSACIYNPIIYCFMNKQFQACIMKMVCGKAMTDESDTCSSQKTEVSTVSSTQVGPN.

The Extracellular portion of the chain corresponds to 1–33; that stretch reads MRKMSEEEFYLFKNISSVGPWDGPQYHIAPVWA. A glycan (N-linked (GlcNAc...) asparagine) is linked at Asn14. A helical transmembrane segment spans residues 34-58; sequence FYLQAAFMGTVFLIGFPLNAMVLVA. At 59–70 the chain is on the cytoplasmic side; that stretch reads TLRYKKLRQPLN. Residues 71-96 traverse the membrane as a helical segment; it reads YILVNVSFGGFLLCIFSVFPVFVASC. The Extracellular segment spans residues 97-110; it reads NGYFVFGRHVCALE. Cys107 and Cys184 are disulfide-bonded. Residues 111–130 form a helical membrane-spanning segment; that stretch reads GFLGTVAGLVTGWSLAFLAF. Topologically, residues 131-149 are cytoplasmic; it reads ERYIVICKPFGNFRFSSKH. Residues 150–173 traverse the membrane as a helical segment; it reads ALTVVLATWTIGIGVSIPPFFGWS. Residues 174-199 are Extracellular-facing; the sequence is RFIPEGLQCSCGPDWYTVGTKYRSES. A helical transmembrane segment spans residues 200 to 227; sequence YTWFLFIFCFIVPLSLICFSYTQLLRAL. Residues 228–249 lie on the Cytoplasmic side of the membrane; sequence KAVAAQQQESATTQKAEREVSR. Residues 250–273 traverse the membrane as a helical segment; it reads MVVVMVGSFCVCYVPYAAFAMYMV. Topologically, residues 274–281 are extracellular; the sequence is NNRNHGLD. Residues 282 to 306 traverse the membrane as a helical segment; sequence LRLVTIPSFFSKSACIYNPIIYCFM. Lys293 carries the N6-(retinylidene)lysine modification. Residues 307–348 lie on the Cytoplasmic side of the membrane; the sequence is NKQFQACIMKMVCGKAMTDESDTCSSQKTEVSTVSSTQVGPN.

This sequence belongs to the G-protein coupled receptor 1 family. Opsin subfamily. Post-translationally, phosphorylated on some or all of the serine and threonine residues present in the C-terminal region.

The protein resides in the cell membrane. Its subcellular location is the photoreceptor inner segment. The protein localises to the cell projection. It is found in the cilium. It localises to the photoreceptor outer segment. The protein resides in the cytoplasm. Its subcellular location is the perinuclear region. Its function is as follows. Visual pigments are the light-absorbing molecules that mediate vision. They consist of an apoprotein, opsin, covalently linked to cis-retinal. Required for the maintenance of cone outer segment organization in the ventral retina, but not essential for the maintenance of functioning cone photoreceptors. Involved in ensuring correct abundance and localization of retinal membrane proteins. May increase spectral sensitivity in dim light. The chain is Short-wave-sensitive opsin 1 (OPN1SW) from Pan paniscus (Pygmy chimpanzee).